We begin with the raw amino-acid sequence, 183 residues long: Ribosomal RNA small subunit methyltransferase G (183 aa).

S-adenosyl-L-methionine is bound by residues Gly-60, Phe-65, 111-112, and Arg-125; that span reads IE.

Belongs to the methyltransferase superfamily. RNA methyltransferase RsmG family.

It is found in the cytoplasm. It carries out the reaction guanosine(527) in 16S rRNA + S-adenosyl-L-methionine = N(7)-methylguanosine(527) in 16S rRNA + S-adenosyl-L-homocysteine. Specifically methylates the N7 position of guanine in position 527 of 16S rRNA. The chain is Ribosomal RNA small subunit methyltransferase G from Campylobacter hominis (strain ATCC BAA-381 / DSM 21671 / CCUG 45161 / LMG 19568 / NCTC 13146 / CH001A).